The sequence spans 333 residues: Taste receptor type 2 member 38 (333 aa).

Residues methionine 1–threonine 17 lie on the Extracellular side of the membrane. A helical transmembrane segment spans residues phenylalanine 18–leucine 38. Topologically, residues valine 39 to cysteine 55 are cytoplasmic. The helical transmembrane segment at valine 56 to isoleucine 76 threads the bilayer. Residues glutamine 77–alanine 94 are Extracellular-facing. Residues isoleucine 95 to leucine 115 traverse the membrane as a helical segment. The Cytoplasmic segment spans residues leucine 116–glutamine 142. A helical membrane pass occupies residues methionine 143–phenylalanine 163. Topologically, residues serine 164 to asparagine 190 are extracellular. Asparagine 178 carries N-linked (GlcNAc...) asparagine glycosylation. A helical transmembrane segment spans residues leucine 191–valine 211. Over serine 212 to serine 251 the chain is Cytoplasmic. Residues phenylalanine 252–leucine 272 traverse the membrane as a helical segment. Residues tryptophan 273–lysine 276 lie on the Extracellular side of the membrane. A helical transmembrane segment spans residues isoleucine 277–leucine 297. The Cytoplasmic portion of the chain corresponds to isoleucine 298–cysteine 333.

Belongs to the G-protein coupled receptor T2R family.

The protein resides in the membrane. In terms of biological role, receptor that may play a role in the perception of bitterness and is gustducin-linked. May play a role in sensing the chemical composition of the gastrointestinal content. The activity of this receptor may stimulate alpha gustducin, mediate PLC-beta-2 activation and lead to the gating of TRPM5. In Pan troglodytes (Chimpanzee), this protein is Taste receptor type 2 member 38 (TAS2R38).